Consider the following 255-residue polypeptide: Hydroxyacylglutathione hydrolase (255 aa).

Positions 56, 58, 60, 61, 114, 133, and 171 each coordinate Zn(2+).

Belongs to the metallo-beta-lactamase superfamily. Glyoxalase II family. As to quaternary structure, monomer. It depends on Zn(2+) as a cofactor.

It carries out the reaction an S-(2-hydroxyacyl)glutathione + H2O = a 2-hydroxy carboxylate + glutathione + H(+). It functions in the pathway secondary metabolite metabolism; methylglyoxal degradation; (R)-lactate from methylglyoxal: step 2/2. Its function is as follows. Thiolesterase that catalyzes the hydrolysis of S-D-lactoyl-glutathione to form glutathione and D-lactic acid. The polypeptide is Hydroxyacylglutathione hydrolase (Rhodopseudomonas palustris (strain BisB5)).